The chain runs to 179 residues: Adenine phosphoribosyltransferase (179 aa).

The protein belongs to the purine/pyrimidine phosphoribosyltransferase family. In terms of assembly, homodimer.

It localises to the cytoplasm. It catalyses the reaction AMP + diphosphate = 5-phospho-alpha-D-ribose 1-diphosphate + adenine. The protein operates within purine metabolism; AMP biosynthesis via salvage pathway; AMP from adenine: step 1/1. In terms of biological role, catalyzes a salvage reaction resulting in the formation of AMP, that is energically less costly than de novo synthesis. The chain is Adenine phosphoribosyltransferase from Beijerinckia indica subsp. indica (strain ATCC 9039 / DSM 1715 / NCIMB 8712).